The primary structure comprises 733 residues: MFIKKKIDLGHGKVITIETGKMAKQADGSAVVTMNDTMVLATVVSSKTPPSPNQDFFPLQVEYREKYSAAGKFPGGFFKREGRPSEKEILSARLIDRALRPLFPDGYYQETQIIISVISSDTINDADVLGGIAASAAIMVSDIPFANPMSEVRVGRINGLFIVNPDINELAQSDMDICIGGTEDTICMLEGEMKEISEAEMLDAIKFGHDAIKKICALQRELAAEVAKPKRPFSPTVAPDELVNFVEEHCSAELKALAYTPLAKEERAEKTKAIYTQTIRKTLTHFTDRVGPDQIEADPTSAFCLNEHMIEECIHAVEKKVMRHMILDDGKRLDGRTLEQVRPISIELGLIPRAHGSALFTRGETQALVTLTLGTKKDAQSVDTLTDDKDKRFMLHYNFPPFSVGEIGRVGGAGRREIGHGNLAERAIKMVMPSEQEFPYTVRLVSDILESNGSSSMASVCGGTLAAMDGGIPLKKPVSGIAMGLIKEGDRYAVLSDILGNEDHLGDMDFKVAGTRDGITACQMDIKIDGLDYHILETALEQARKGRLHILDVMAEAIPESRADIGKYAPRLTTIQIPVDAIGMVIGKGGETIRSITEETGAEINIDDDGTVTIACSSPEATKAAVETIKTLVSKPEVGTIYMGKVRDIRDELGAFVEFLPKTDGLVHISEIARERIAKVSDVLKVGDRIKVKLIDVRKDPRTGKTKFALSIKALLDTDQQAETNGEAKPARD.

2 residues coordinate Mg(2+): aspartate 503 and aspartate 509. The KH domain occupies 570-629; that stretch reads PRLTTIQIPVDAIGMVIGKGGETIRSITEETGAEINIDDDGTVTIACSSPEATKAAVETI. The S1 motif domain occupies 639–713; that stretch reads GTIYMGKVRD…GKTKFALSIK (75 aa).

Belongs to the polyribonucleotide nucleotidyltransferase family. Requires Mg(2+) as cofactor.

Its subcellular location is the cytoplasm. The enzyme catalyses RNA(n+1) + phosphate = RNA(n) + a ribonucleoside 5'-diphosphate. Involved in mRNA degradation. Catalyzes the phosphorolysis of single-stranded polyribonucleotides processively in the 3'- to 5'-direction. The sequence is that of Polyribonucleotide nucleotidyltransferase from Chlorobaculum tepidum (strain ATCC 49652 / DSM 12025 / NBRC 103806 / TLS) (Chlorobium tepidum).